The sequence spans 189 residues: Peptidyl-tRNA hydrolase (189 aa).

Tyrosine 15 is a tRNA binding site. Histidine 20 acts as the Proton acceptor in catalysis. Phenylalanine 66, asparagine 68, and asparagine 114 together coordinate tRNA.

This sequence belongs to the PTH family. Monomer.

The protein resides in the cytoplasm. It carries out the reaction an N-acyl-L-alpha-aminoacyl-tRNA + H2O = an N-acyl-L-amino acid + a tRNA + H(+). Hydrolyzes ribosome-free peptidyl-tRNAs (with 1 or more amino acids incorporated), which drop off the ribosome during protein synthesis, or as a result of ribosome stalling. In terms of biological role, catalyzes the release of premature peptidyl moieties from peptidyl-tRNA molecules trapped in stalled 50S ribosomal subunits, and thus maintains levels of free tRNAs and 50S ribosomes. The polypeptide is Peptidyl-tRNA hydrolase (Acidithiobacillus ferrooxidans (strain ATCC 23270 / DSM 14882 / CIP 104768 / NCIMB 8455) (Ferrobacillus ferrooxidans (strain ATCC 23270))).